The chain runs to 468 residues: UDP-glycosyltransferase 89B2 (468 aa).

UDP-alpha-D-glucose-binding positions include Ser287, 347 to 348 (WV), 365 to 373 (HCGWNSVME), and 387 to 390 (SADQ).

This sequence belongs to the UDP-glycosyltransferase family.

Its function is as follows. May glycosylate diterpenes or flavonols in leaves. The sequence is that of UDP-glycosyltransferase 89B2 from Stevia rebaudiana (Stevia).